The chain runs to 260 residues: tRNA pseudouridine synthase C (260 aa).

Aspartate 54 is an active-site residue.

This sequence belongs to the pseudouridine synthase RluA family.

It carries out the reaction uridine(65) in tRNA = pseudouridine(65) in tRNA. Functionally, responsible for synthesis of pseudouridine from uracil-65 in transfer RNAs. This Escherichia coli O157:H7 protein is tRNA pseudouridine synthase C (truC).